We begin with the raw amino-acid sequence, 92 residues long: UPF0250 protein XAC0666 (92 aa).

This sequence belongs to the UPF0250 family.

The protein is UPF0250 protein XAC0666 of Xanthomonas axonopodis pv. citri (strain 306).